A 481-amino-acid chain; its full sequence is Eukaryotic translation initiation factor 3 subunit L (481 aa).

A disordered region spans residues 1-22 (MSVDARTAYPGSRPPANMQDES). In terms of domain architecture, PCI spans 262–457 (DAIRTFSHIL…DLDYAIEGNL (196 aa)).

The protein belongs to the eIF-3 subunit L family. Component of the eukaryotic translation initiation factor 3 (eIF-3) complex.

Its subcellular location is the cytoplasm. Functionally, component of the eukaryotic translation initiation factor 3 (eIF-3) complex, which is involved in protein synthesis of a specialized repertoire of mRNAs and, together with other initiation factors, stimulates binding of mRNA and methionyl-tRNAi to the 40S ribosome. The eIF-3 complex specifically targets and initiates translation of a subset of mRNAs involved in cell proliferation. The chain is Eukaryotic translation initiation factor 3 subunit L from Coccidioides immitis (strain RS) (Valley fever fungus).